The following is a 278-amino-acid chain: Thiazole synthase (278 aa).

Catalysis depends on K109, which acts as the Schiff-base intermediate with DXP. 1-deoxy-D-xylulose 5-phosphate-binding positions include G170, 197–198, and 219–220; these read AG and NT.

It belongs to the ThiG family. Homotetramer. Forms heterodimers with either ThiH or ThiS.

Its subcellular location is the cytoplasm. It carries out the reaction [ThiS sulfur-carrier protein]-C-terminal-Gly-aminoethanethioate + 2-iminoacetate + 1-deoxy-D-xylulose 5-phosphate = [ThiS sulfur-carrier protein]-C-terminal Gly-Gly + 2-[(2R,5Z)-2-carboxy-4-methylthiazol-5(2H)-ylidene]ethyl phosphate + 2 H2O + H(+). Its pathway is cofactor biosynthesis; thiamine diphosphate biosynthesis. Functionally, catalyzes the rearrangement of 1-deoxy-D-xylulose 5-phosphate (DXP) to produce the thiazole phosphate moiety of thiamine. Sulfur is provided by the thiocarboxylate moiety of the carrier protein ThiS. In vitro, sulfur can be provided by H(2)S. In Cupriavidus necator (strain ATCC 17699 / DSM 428 / KCTC 22496 / NCIMB 10442 / H16 / Stanier 337) (Ralstonia eutropha), this protein is Thiazole synthase.